The sequence spans 527 residues: Phosphoenolpyruvate carboxykinase (ATP) (527 aa).

Positions 56, 192, and 198 each coordinate substrate. ATP-binding positions include Lys198, His217, and 233–241 (GLSGTGKTT). Positions 198 and 217 each coordinate Mn(2+). Asp254 lines the Mn(2+) pocket. Residues Glu282, Arg319, and Thr444 each coordinate ATP. Arg319 contributes to the substrate binding site.

It belongs to the phosphoenolpyruvate carboxykinase (ATP) family. It depends on Mn(2+) as a cofactor.

It is found in the cytoplasm. It carries out the reaction oxaloacetate + ATP = phosphoenolpyruvate + ADP + CO2. It functions in the pathway carbohydrate biosynthesis; gluconeogenesis. In terms of biological role, involved in the gluconeogenesis. Catalyzes the conversion of oxaloacetate (OAA) to phosphoenolpyruvate (PEP) through direct phosphoryl transfer between the nucleoside triphosphate and OAA. This chain is Phosphoenolpyruvate carboxykinase (ATP), found in Bacillus subtilis (strain 168).